Consider the following 334-residue polypeptide: DNA-directed RNA polymerase subunit alpha (334 aa).

The tract at residues 1 to 234 is alpha N-terminal domain (alpha-NTD); it reads MQRSLNEFLT…QQLAVFVDFD (234 aa). Residues 248-334 are alpha C-terminal domain (alpha-CTD); the sequence is IDPILLRPVD…IRGDDRVLGG (87 aa).

Belongs to the RNA polymerase alpha chain family. In terms of assembly, homodimer. The RNAP catalytic core consists of 2 alpha, 1 beta, 1 beta' and 1 omega subunit. When a sigma factor is associated with the core the holoenzyme is formed, which can initiate transcription.

The enzyme catalyses RNA(n) + a ribonucleoside 5'-triphosphate = RNA(n+1) + diphosphate. Its function is as follows. DNA-dependent RNA polymerase catalyzes the transcription of DNA into RNA using the four ribonucleoside triphosphates as substrates. The sequence is that of DNA-directed RNA polymerase subunit alpha from Hahella chejuensis (strain KCTC 2396).